A 325-amino-acid chain; its full sequence is Bifunctional nuclease 1 (325 aa).

The BFN domain occupies 117–252 (CVHNNPQGGH…YLAYSDGMRV (136 aa)). A UVR domain is found at 284 to 318 (TKEFNILSKMMQAVDEERYDEAAEWRDKLGQFRAK).

The protein belongs to the bifunctional nuclease family.

The protein localises to the nucleus. In terms of biological role, bifunctional nuclease with both RNase and DNase activities. Involved in basal defense response. Participates in abscisic acid-derived callose deposition following infection by a necrotrophic pathogen. This Arabidopsis thaliana (Mouse-ear cress) protein is Bifunctional nuclease 1 (BBD1).